A 249-amino-acid polypeptide reads, in one-letter code: 14-3-3-like protein D (249 aa).

This sequence belongs to the 14-3-3 family.

The chain is 14-3-3-like protein D from Nicotiana tabacum (Common tobacco).